Here is an 83-residue protein sequence, read N- to C-terminus: Short neurotoxin OKI-Ed (83 aa).

The N-terminal stretch at 1–21 (MKTLLLTLVVVTIVCLDLGYT) is a signal peptide. Cystine bridges form between Cys24/Cys45, Cys38/Cys62, Cys64/Cys75, and Cys76/Cys81.

Belongs to the three-finger toxin family. Short-chain subfamily. Type I alpha-neurotoxin sub-subfamily. As to expression, expressed by the venom gland.

Its subcellular location is the secreted. Binds to muscle nicotinic acetylcholine receptor (nAChR) and inhibit acetylcholine from binding to the receptor, thereby impairing neuromuscular transmission. The sequence is that of Short neurotoxin OKI-Ed from Laticauda semifasciata (Black-banded sea krait).